The chain runs to 50 residues: Small nuclear ribonucleoprotein Sm D2 (50 aa).

The tract at residues 1–36 (MSLLNKPKSEMTPEELQKREEEEFNTGPLSVXTQSX) is disordered. Ser-2 carries the N-acetylserine modification. Residues Lys-6 and Lys-8 each participate in a glycyl lysine isopeptide (Lys-Gly) (interchain with G-Cter in SUMO2) cross-link. The segment covering 7 to 21 (PKSEMTPEELQKREE) has biased composition (basic and acidic residues). Ser-9 is subject to Phosphoserine. Residue Thr-12 is modified to Phosphothreonine.

It belongs to the snRNP core protein family. Core component of the spliceosomal U1, U2, U4 and U5 small nuclear ribonucleoproteins (snRNPs), the building blocks of the spliceosome. Most spliceosomal snRNPs contain a common set of Sm proteins, SNRPB, SNRPD1, SNRPD2, SNRPD3, SNRPE, SNRPF and SNRPG that assemble in a heptameric protein ring on the Sm site of the small nuclear RNA to form the core snRNP. Component of the U1 snRNP. The U1 snRNP is composed of the U1 snRNA and the 7 core Sm proteins SNRPB, SNRPD1, SNRPD2, SNRPD3, SNRPE, SNRPF and SNRPG, and at least three U1 snRNP-specific proteins SNRNP70/U1-70K, SNRPA/U1-A and SNRPC/U1-C. Component of the U4/U6-U5 tri-snRNP complex composed of the U4, U6 and U5 snRNAs and at least PRPF3, PRPF4, PRPF6, PRPF8, PRPF31, SNRNP200, TXNL4A, SNRNP40, SNRPB, SNRPD1, SNRPD2, SNRPD3, SNRPE, SNRPF, SNRPG, DDX23, CD2BP2, PPIH, SNU13, EFTUD2, SART1 and USP39, plus LSM2, LSM3, LSM4, LSM5, LSM6, LSM7 and LSM8. Component of the minor spliceosome, which splices U12-type introns. Part of the SMN-Sm complex that contains SMN1, GEMIN2/SIP1, DDX20/GEMIN3, GEMIN4, GEMIN5, GEMIN6, GEMIN7, GEMIN8, STRAP/UNRIP and the Sm proteins SNRPB, SNRPD1, SNRPD2, SNRPD3, SNRPE, SNRPF and SNRPG; catalyzes core snRNPs assembly. Forms a 6S pICln-Sm complex composed of CLNS1A/pICln, SNRPD1, SNRPD2, SNRPE, SNRPF and SNRPG; ring-like structure where CLNS1A/pICln mimics additional Sm proteins and which is unable to assemble into the core snRNP. Interacts with SMN1; the interaction is direct. Interacts with GEMIN2; the interaction is direct. Interacts with SNRPD1; the interaction is direct. Interacts with SNRPF; the interaction is direct.

Its subcellular location is the cytoplasm. The protein resides in the cytosol. It is found in the nucleus. Its function is as follows. Plays a role in pre-mRNA splicing as a core component of the spliceosomal U1, U2, U4 and U5 small nuclear ribonucleoproteins (snRNPs), the building blocks of the spliceosome. Component of both the pre-catalytic spliceosome B complex and activated spliceosome C complexes. As a component of the minor spliceosome, involved in the splicing of U12-type introns in pre-mRNAs. This Sus scrofa (Pig) protein is Small nuclear ribonucleoprotein Sm D2 (SNRPD2).